We begin with the raw amino-acid sequence, 519 residues long: Na(+)/H(+) exchange regulatory cofactor NHE-RF3 (519 aa).

One can recognise a PDZ 1 domain in the interval 9 to 90 (ECKLSKQEGQ…SVTLLVLDGD (82 aa)). Ser-108, Ser-148, Ser-192, Ser-250, Ser-334, and Ser-348 each carry phosphoserine. 2 consecutive PDZ domains span residues 134-215 (RLCY…VDKE) and 243-323 (IVEM…VDKE). The interval 347–374 (GSVKEAPAPTPTSLEVSSPPDTTEEVDH) is disordered. A compositionally biased stretch (polar residues) spans 357–367 (PTSLEVSSPPD). In terms of domain architecture, PDZ 4 spans 378–458 (LCRLAKGENG…NVTLLVCGKK (81 aa)). Phosphothreonine is present on Thr-451. A disordered region spans residues 479 to 519 (DTPPDSKEGIVVESNHDSHMAKERAHSTASHSSSNSEDTEM). A compositionally biased stretch (basic and acidic residues) spans 482–504 (PDSKEGIVVESNHDSHMAKERAH). Phosphoserine occurs at positions 492, 508, 510, 511, 512, and 514. Residues 505–519 (STASHSSSNSEDTEM) show a composition bias toward low complexity.

The protein belongs to the NHER family. As to quaternary structure, interacts with PDZK1IP1 and ABCC2. Interacts (via PDZ domains 1 and 3) with SCARB1 (C-terminal domain). Forms a heterodimeric complex with NHERF1. Interacts with AKAP2, BCR, CFTR, SLC22A12, SLC22A4, SLC22A5, NHERF2 and SLC17A1. Component of a complex, composed of PDZK1, SYNGAP1, KLHL17 and NMDA receptors. Interacts (via PDZ1 domain) directly with KLHL17; the interaction is important for integrity of actin cytoskeleton structures in neurons. Interacts (via the first PDZ domain) with PTGIR (via non-isoprenylated C-terminus). Interacts (via C-terminal PDZ domain) with SLC26A6 (via C-terminal domain). Interacts (via C-terminal PDZ domain) with SLC9A3 (via C-terminal domain). Interacts (via PDZ domains 1 and 3) with SLC5A8 (via PDZ-binding motif); interaction increases nicotinate transport activity of SLC5A8. Expression is limited to epithelial cells. Expressed in the kidney (brush border of proximal tubule), pancreas, liver, and small intestine. Expressed at a lower level in the adrenal cortex, testis and stomach. Overexpressed in breast, renal and lung carcinomas.

It localises to the membrane. It is found in the cell membrane. Its function is as follows. A scaffold protein that connects plasma membrane proteins and regulatory components, regulating their surface expression in epithelial cells apical domains. May be involved in the coordination of a diverse range of regulatory processes for ion transport and second messenger cascades. In complex with NHERF1, may cluster proteins that are functionally dependent in a mutual fashion and modulate the trafficking and the activity of the associated membrane proteins. May play a role in the cellular mechanisms associated with multidrug resistance through its interaction with ABCC2 and PDZK1IP1. May potentiate the CFTR chloride channel activity. Required for normal cell-surface expression of SCARB1. Plays a role in maintaining normal plasma cholesterol levels via its effects on SCARB1. Plays a role in the normal localization and function of the chloride-anion exchanger SLC26A6 to the plasma membrane in the brush border of the proximal tubule of the kidney. May be involved in the regulation of proximal tubular Na(+)-dependent inorganic phosphate cotransport therefore playing an important role in tubule function. The sequence is that of Na(+)/H(+) exchange regulatory cofactor NHE-RF3 (PDZK1) from Homo sapiens (Human).